Here is a 56-residue protein sequence, read N- to C-terminus: Large ribosomal subunit protein bL32 (56 aa).

The segment covering 1–16 (MAVQKNRKTRSKRGMR) has biased composition (basic residues). Positions 1 to 37 (MAVQKNRKTRSKRGMRRSHDALGTATMSVDSTSGETH) are disordered. A compositionally biased stretch (polar residues) spans 25–35 (ATMSVDSTSGE).

The protein belongs to the bacterial ribosomal protein bL32 family.

The polypeptide is Large ribosomal subunit protein bL32 (Pseudoalteromonas atlantica (strain T6c / ATCC BAA-1087)).